Reading from the N-terminus, the 217-residue chain is MNQTLLSEFGSPSQRVENALESLRNGRGVLVLDDEDRENEGDMIFAAQNMTVEQMALTIRYGSGIVCLCLTEERRQQLALPMMVERNSSHYQTAFTVTIEAAEGVSTGVSAADRLTTIRAAIKDNAKPTDLNRPGHVFPLCAQPGGVLVRGGHTEAAVDLTTLAGLKPAGVLCEVTNDDGSMAHAPEIIAFGRRHNMPVLTIEDLVAYRRALMREVS.

Residues 37–38, D42, 150–154, and E174 each bind D-ribulose 5-phosphate; these read RE and RGGHT. E38 is a binding site for Mg(2+). A Mg(2+)-binding site is contributed by H153.

This sequence belongs to the DHBP synthase family. As to quaternary structure, homodimer. Mg(2+) is required as a cofactor. The cofactor is Mn(2+).

It catalyses the reaction D-ribulose 5-phosphate = (2S)-2-hydroxy-3-oxobutyl phosphate + formate + H(+). It functions in the pathway cofactor biosynthesis; riboflavin biosynthesis; 2-hydroxy-3-oxobutyl phosphate from D-ribulose 5-phosphate: step 1/1. In terms of biological role, catalyzes the conversion of D-ribulose 5-phosphate to formate and 3,4-dihydroxy-2-butanone 4-phosphate. In Sodalis glossinidius (strain morsitans), this protein is 3,4-dihydroxy-2-butanone 4-phosphate synthase.